Consider the following 571-residue polypeptide: Proline--tRNA ligase (571 aa).

This sequence belongs to the class-II aminoacyl-tRNA synthetase family. ProS type 1 subfamily. Homodimer.

The protein resides in the cytoplasm. The catalysed reaction is tRNA(Pro) + L-proline + ATP = L-prolyl-tRNA(Pro) + AMP + diphosphate. In terms of biological role, catalyzes the attachment of proline to tRNA(Pro) in a two-step reaction: proline is first activated by ATP to form Pro-AMP and then transferred to the acceptor end of tRNA(Pro). As ProRS can inadvertently accommodate and process non-cognate amino acids such as alanine and cysteine, to avoid such errors it has two additional distinct editing activities against alanine. One activity is designated as 'pretransfer' editing and involves the tRNA(Pro)-independent hydrolysis of activated Ala-AMP. The other activity is designated 'posttransfer' editing and involves deacylation of mischarged Ala-tRNA(Pro). The misacylated Cys-tRNA(Pro) is not edited by ProRS. In Pseudomonas putida (strain W619), this protein is Proline--tRNA ligase.